The sequence spans 538 residues: Putative cysteine ligase BshC (538 aa).

A coiled-coil region spans residues 460-484 (KINEQIELLERMLKRNVEKKHEVEL).

This sequence belongs to the BshC family.

Functionally, involved in bacillithiol (BSH) biosynthesis. May catalyze the last step of the pathway, the addition of cysteine to glucosamine malate (GlcN-Mal) to generate BSH. The chain is Putative cysteine ligase BshC from Bacillus cereus (strain AH820).